The following is an 833-amino-acid chain: Histone deacetylase HDA1 (833 aa).

A compositionally biased stretch (basic and acidic residues) spans 1–13 (MSTGQEEHLDSKL). Disordered stretches follow at residues 1-40 (MSTG…IQAS) and 760-791 (NGNG…SKRP). The stretch at 5–52 (QEEHLDSKLENQISEEENQSQNQNFPTAIEDSIQASIEKLDEVDDEIN) forms a coiled coil. Residues 760–776 (NGNGNGNNGNSSNGGGN) are compositionally biased toward gly residues.

Belongs to the histone deacetylase family. HD type 2 subfamily. In terms of assembly, interacts with BRG1.

The protein resides in the nucleus. The catalysed reaction is N(6)-acetyl-L-lysyl-[histone] + H2O = L-lysyl-[histone] + acetate. Responsible for the deacetylation of lysine residues on the N-terminal part of the core histones (H2A, H2B, H3 and H4). Histone deacetylation gives a tag for epigenetic repression and plays an important role in transcriptional regulation, cell cycle progression and developmental events. Histone deacetylases act via the formation of large multiprotein complexes. Deacetylates the YNG2 subunit of NuA4 histone acetyltransferase (HAT) module, leading to the reduction of YNG2 and NuA4 HAT at the promoters of hypha-specific genes. Plays a key role in the regulation of filamentous growth and virulence. Involved in the switch between two heritable states, the white and opaque states. These two cell types differ in many characteristics, including cell structure, mating competence, and virulence. Each state is heritable for many generations, and switching between states occurs stochastically at low frequency. The polypeptide is Histone deacetylase HDA1 (HDA1) (Candida albicans (strain SC5314 / ATCC MYA-2876) (Yeast)).